The chain runs to 508 residues: Tryptamine 4-monooxygenase (508 aa).

Positions 1 to 19 are cleaved as a signal peptide; that stretch reads MIAVLFSFVIAGCIYYIVS. Cys-439 serves as a coordination point for heme.

Belongs to the cytochrome P450 family. Heme is required as a cofactor.

It catalyses the reaction tryptamine + AH2 + O2 = 4-hydroxytryptamine + A + H2O. It participates in secondary metabolite biosynthesis. Functionally, cytochrome P450 monooxygenase; part of the gene cluster that mediates the biosynthesis of psilocybin, a psychotropic tryptamine-derived natural product. The first step in the pathway is the decarboxylation of L-tryptophan to tryptamine by the decarboxylase psiD. 4-hydroxy-L-tryptophan is accepted as substrate by psiD as well. The cytochrome P450 monooxygenase psiH then converts tryptamine to 4-hydroxytryptamine. The kinase psiK catalyzes the 4-O-phosphorylation step by converting 4-hydroxytryptamine into norbaeocystin. The methyltransferase psiM then catalyzes iterative methyl transfer to the amino group of norbaeocystin to yield psilocybin via a monomethylated intermediate, baeocystin. In Psilocybe cubensis (Psychedelic mushroom), this protein is Tryptamine 4-monooxygenase.